The primary structure comprises 355 residues: Mannonate dehydratase (355 aa).

Belongs to the mannonate dehydratase family. Fe(2+) serves as cofactor. Requires Mn(2+) as cofactor.

It catalyses the reaction D-mannonate = 2-dehydro-3-deoxy-D-gluconate + H2O. It functions in the pathway carbohydrate metabolism; pentose and glucuronate interconversion. Catalyzes the dehydration of D-mannonate. This Brachyspira hyodysenteriae (strain ATCC 49526 / WA1) protein is Mannonate dehydratase.